Consider the following 68-residue polypeptide: Protein SlyX homolog (68 aa).

Belongs to the SlyX family.

This is Protein SlyX homolog from Pseudomonas putida (strain GB-1).